We begin with the raw amino-acid sequence, 320 residues long: MKFFISFAFLCLVLSCVAALSPDQVESRLKSYVENRSFALLRSGRVARAGTNTVQCYDKYVPLIRQAAAEGKFASDKCAQEGQNAREEETKKSEVIRESLNVKVASIEKGLGACVAKYDVLEYFTCLRDHASESQTAAGEVGKTSAVIVEGLNIVLTNIELREKYCIDQAFEQAQEKSDILFTELENCLIEGLPEPEPEPEPEPEPEPEPEPEPEPEPEPEPEPEPEPEPEPEPEPEPEPEPEPEPEPEPEPEPEPEPEPEPEPEPEPEPEPEPEPEPEPEPEPEPEPEPEPEPEPEPEPEPEPEPQPEPESKPNSLFNF.

Positions 1-19 are cleaved as a signal peptide; it reads MKFFISFAFLCLVLSCVAA. Residues 192-320 form a disordered region; it reads GLPEPEPEPE…ESKPNSLFNF (129 aa). Residues 194–308 show a composition bias toward acidic residues; it reads PEPEPEPEPE…EPEPEPEPQP (115 aa). Residues 194-311 form a 59 X 2 AA tandem repeats of P-E region; the sequence is PEPEPEPEPE…PEPEPQPEPE (118 aa).

Expressed in the gut, but not salivary glands, of female and male flies (at protein level). Present in vesicles in midgut cells and in the lumen of the gut.

Its subcellular location is the secreted. This chain is Protein TsetseEP, found in Glossina morsitans morsitans (Savannah tsetse fly).